A 77-amino-acid polypeptide reads, in one-letter code: Acyl carrier protein (77 aa).

Positions 2–77 constitute a Carrier domain; that stretch reads SDIEQRVKNV…LAIDYVKSHQ (76 aa). O-(pantetheine 4'-phosphoryl)serine is present on Ser-37.

This sequence belongs to the acyl carrier protein (ACP) family. Post-translationally, 4'-phosphopantetheine is transferred from CoA to a specific serine of apo-ACP by AcpS. This modification is essential for activity because fatty acids are bound in thioester linkage to the sulfhydryl of the prosthetic group.

The protein localises to the cytoplasm. It functions in the pathway lipid metabolism; fatty acid biosynthesis. Functionally, carrier of the growing fatty acid chain in fatty acid biosynthesis. This Leucothrix mucor protein is Acyl carrier protein.